Consider the following 293-residue polypeptide: MQRVVFPNKILPYLLVAPQIVLTIVFFFWPASQALYQSVIREDPFGLKSGFVGFANFSAVLSEANYLNSLKVTVIFSVLTALLAMGVALLLATAADRVVRGKTFYRTLLIWPYAVAPAVAGMLWLFMFNPAMGTFAYMLRRNGFHWDPLLNGNHAMILIVVAAAWKQISYNFLFFVAGLQAIPKSLIEAAAIDGARGTRRFWTIIFPLLAPTTFFLLVVNTVYAFFDTFGIIHSVTGGGPARATETLVYKVYNDGFVNLNLGSSAAQSVILMAIVIGLTAFQFRFVEKRVHYG.

Transmembrane regions (helical) follow at residues 10 to 30 (ILPY…FFWP), 72 to 92 (VTVI…LLLA), 108 to 128 (LLIW…LFMF), 156 to 176 (MILI…LFFV), 204 to 224 (IIFP…TVYA), and 261 to 281 (LGSS…LTAF). In terms of domain architecture, ABC transmembrane type-1 spans 66 to 282 (YLNSLKVTVI…AIVIGLTAFQ (217 aa)).

The protein belongs to the binding-protein-dependent transport system permease family. The complex is composed of two ATP-binding proteins (UgpC), two transmembrane proteins (UgpA and UgpE) and a solute-binding protein (UgpB).

The protein localises to the cell inner membrane. In terms of biological role, part of the ABC transporter complex UgpBAEC involved in sn-glycerol-3-phosphate (G3P) import. Probably responsible for the translocation of the substrate across the membrane. In Rhizobium meliloti (strain 1021) (Ensifer meliloti), this protein is sn-glycerol-3-phosphate transport system permease protein UgpA (ugpA).